The primary structure comprises 213 residues: Orotate phosphoribosyltransferase (213 aa).

K26 is a binding site for 5-phospho-alpha-D-ribose 1-diphosphate. Residue 34–35 (FF) participates in orotate binding. Residues 72–73 (YK), R99, K100, K103, H105, and 124–132 (DDVITAGTA) each bind 5-phospho-alpha-D-ribose 1-diphosphate. The orotate site is built by T128 and R156.

The protein belongs to the purine/pyrimidine phosphoribosyltransferase family. PyrE subfamily. In terms of assembly, homodimer. It depends on Mg(2+) as a cofactor.

The catalysed reaction is orotidine 5'-phosphate + diphosphate = orotate + 5-phospho-alpha-D-ribose 1-diphosphate. The protein operates within pyrimidine metabolism; UMP biosynthesis via de novo pathway; UMP from orotate: step 1/2. Catalyzes the transfer of a ribosyl phosphate group from 5-phosphoribose 1-diphosphate to orotate, leading to the formation of orotidine monophosphate (OMP). This chain is Orotate phosphoribosyltransferase, found in Escherichia coli O127:H6 (strain E2348/69 / EPEC).